The following is a 315-amino-acid chain: Putative pyruvate, phosphate dikinase regulatory protein (315 aa).

The disordered stretch occupies residues M1–E32. G189 to T196 serves as a coordination point for ADP.

It belongs to the pyruvate, phosphate/water dikinase regulatory protein family. PDRP subfamily.

It carries out the reaction N(tele)-phospho-L-histidyl/L-threonyl-[pyruvate, phosphate dikinase] + ADP = N(tele)-phospho-L-histidyl/O-phospho-L-threonyl-[pyruvate, phosphate dikinase] + AMP + H(+). The catalysed reaction is N(tele)-phospho-L-histidyl/O-phospho-L-threonyl-[pyruvate, phosphate dikinase] + phosphate + H(+) = N(tele)-phospho-L-histidyl/L-threonyl-[pyruvate, phosphate dikinase] + diphosphate. Functionally, bifunctional serine/threonine kinase and phosphorylase involved in the regulation of the pyruvate, phosphate dikinase (PPDK) by catalyzing its phosphorylation/dephosphorylation. The chain is Putative pyruvate, phosphate dikinase regulatory protein from Caulobacter vibrioides (strain ATCC 19089 / CIP 103742 / CB 15) (Caulobacter crescentus).